Here is a 168-residue protein sequence, read N- to C-terminus: Pleiotrophin (168 aa).

The signal sequence occupies residues 1-32 (MSSQQYQQQRRKFAAAFLALIFILAAVDTAEA). 5 disulfides stabilise this stretch: cysteine 47-cysteine 76, cysteine 55-cysteine 85, cysteine 62-cysteine 89, cysteine 99-cysteine 131, and cysteine 109-cysteine 141. 2 chondroitin sulfate binding regions span residues 92-99 (KKQFGAEC) and 123-131 (KRALHNADC). Residues 139-168 (KPCGKLTKPKPQAESKKKKKEGKKQEKMLD) are disordered. A chondroitin sulfate A binding region spans residues 147-168 (PKPQAESKKKKKEGKKQEKMLD).

This sequence belongs to the pleiotrophin family. As to quaternary structure, interacts with ALK and NEK6. Interacts with PTPRZ1 (via chondroitin sulfate groups); promotes formation of homooligomers; oligomerization impairs tyrosine phosphatase activity. Forms a complex with PTPRZ1 and CTNNB1; this complex inactivates PTPRZ1 protein tyrosine phosphatase activity through PTN interaction and stimulates tyrosine phosphorylation of CTNNB1. Interacts with ITGB3 and ITGA5. Forms a complex with PTPRZ1 and integrin alpha-V/beta-3 (ITGAV:ITGB3) that stimulates endothelial cell migration through ITGB3 'Tyr-773' phosphorylation. Interacts with SDC3 (via heparan sulfate chains); this interaction mediates the neurite outgrowth-promoting signal from PTN to the cytoskeleton of growing neurites; this interaction mediates osteoblast recruitment. Interacts with GPC2 (via heparan sulfate); this interaction promotes neurite outgrowth through binding of PTN with chondroitin sulfate of proteoglycans, thereby releasing PTPRS of chondroitin sulfate proteoglycans (CSPGs) and leading to binding with heparan sulfate of GPC2. Post-translationally, phosphorylated by NEK6. Osteoblast and brain. Expressed in the follicular epithelium and granulosa cells of the ovary. Strongly expressed in the uterus of newborn mice, and the degree of expression decreased in one-week-old mice, although the expression continues even in the uteri of adult mice. Expression gradually increases from proestrus to estrus, then decreases sharply, and thereafter gradually increased again. strongly expressed in the cochlea of WT mice 1 week after birth, and then the expression decreased and was undetectable by week 8 after birth. Expressed around the cell soma of osteocytes and apparently captured in the unmineralized interstitial matrix surrounding the cells. Furthermore distributed throughout the intraosseous canalicular porosity, being localized in the unmineralized matrix around the cell processes. Strongly expressed in the innermost layer of the periosteum.

It localises to the secreted. Functionally, secreted growth factor that mediates its signal through cell-surface proteoglycan and non-proteoglycan receptors. Binds cell-surface proteoglycan receptor via their chondroitin sulfate (CS) groups. Thereby regulates many processes like cell proliferation, cell survival, cell growth, cell differentiation and cell migration in several tissues namely neuron and bone. Also plays a role in synaptic plasticity and learning-related behavior by inhibiting long-term synaptic potentiation. Binds PTPRZ1, leading to neutralization of the negative charges of the CS chains of PTPRZ1, inducing PTPRZ1 clustering, thereby causing the dimerization and inactivation of its phosphatase activity leading to increased tyrosine phosphorylation of each of the PTPRZ1 substrates like ALK or AFAP1L2 in order to activate the PI3K-AKT pathway. Through PTPRZ1 binding controls oligodendrocyte precursor cell differentiation by enhancing the phosphorylation of AFAP1L2 in order to activate the PI3K-AKT pathway. Forms a complex with PTPRZ1 and integrin alpha-V/beta-3 (ITGAV:ITGB3) that stimulates endothelial cell migration through SRC dephosphorylation and activation that consequently leads to ITGB3 'Tyr-773' phosphorylation. In adult hippocampus promotes dendritic arborization, spine development, and functional integration and connectivity of newborn granule neurons through ALK by activating AKT signaling pathway. Binds GPC2 and chondroitin sulfate proteoglycans (CSPGs) at the neuron surface, leading to abrogation of binding between PTPRS and CSPGs and neurite outgrowth promotion. Binds SDC3 and mediates bone formation by recruiting and attaching osteoblasts/osteoblast precursors to the sites for new bone deposition. Binds ALK and promotes cell survival and cell proliferation through MAPK pathway activation. Inhibits proliferation and enhances differentiation of neural stem cells by inhibiting FGF2-induced fibroblast growth factor receptor signaling pathway. Mediates regulatory mechanisms in normal hemostasis and in hematopoietic regeneration and in maintaining the balance of myeloid and lymphoid regeneration. In addition may play a role in the female reproductive system, auditory response and the progesterone-induced decidualization pathway. The chain is Pleiotrophin from Mus musculus (Mouse).